The chain runs to 268 residues: Ubiquinone biosynthesis protein COQ4 homolog, mitochondrial (268 aa).

4 residues coordinate Zn(2+): His-171, Asp-172, His-175, and Glu-187.

This sequence belongs to the COQ4 family. Component of a multi-subunit COQ enzyme complex. It depends on Zn(2+) as a cofactor.

The protein localises to the mitochondrion inner membrane. It catalyses the reaction a 4-hydroxy-3-methoxy-5-(all-trans-polyprenyl)benzoate + H(+) = a 2-methoxy-6-(all-trans-polyprenyl)phenol + CO2. The protein operates within cofactor biosynthesis; ubiquinone biosynthesis. Functionally, lyase that catalyzes the C1-decarboxylation of 4-hydroxy-3-methoxy-5-(all-trans-polyprenyl)benzoic acid into 2-methoxy-6-(all-trans-polyprenyl)phenol during ubiquinone biosynthesis. This is Ubiquinone biosynthesis protein COQ4 homolog, mitochondrial from Drosophila yakuba (Fruit fly).